The primary structure comprises 142 residues: Fluoride-specific ion channel FluC 1 (142 aa).

Transmembrane regions (helical) follow at residues 17-37, 42-62, 80-100, and 109-129; these read AWVS…GLAL, GFPF…GFYA, FVMT…LETF, and YIAL…VWLG. Na(+) contacts are provided by glycine 87 and threonine 90.

It belongs to the fluoride channel Fluc/FEX (TC 1.A.43) family.

It localises to the cell inner membrane. It catalyses the reaction fluoride(in) = fluoride(out). Its activity is regulated as follows. Na(+) is not transported, but it plays an essential structural role and its presence is essential for fluoride channel function. In terms of biological role, fluoride-specific ion channel. Important for reducing fluoride concentration in the cell, thus reducing its toxicity. The sequence is that of Fluoride-specific ion channel FluC 1 from Bradyrhizobium diazoefficiens (strain JCM 10833 / BCRC 13528 / IAM 13628 / NBRC 14792 / USDA 110).